The primary structure comprises 329 residues: MKIAVIGAGAWGTTLANTLAKKGHNTHLWVREQELCDEITNTGYNSVFLPDFKLSPDLKCSSNPQQVMEGADYFLLVVPSQFLRSALADMKQYFPQNPAVVCASKGIELNTGAPMSQVVFESLEGLNPRFAHLSGPTFAYELSAELPTSIVLGCGDEKLAAEVQDIFSTPYLRIYTNPDYRGVELGGAIKNIMAIAAGMADGLKFGHNTRAALITRGIAEMSRLGEAMGAQASTFMGLSGMGDLVLTCTGDLSRNRQVGLKLGQGMKLNEILKMRMVAEGVKTTESVYFLAKKLGVELPITEQVYKILYEDKDPATAVCDLMNRDLKAE.

Positions 11, 31, and 105 each coordinate NADPH. 3 residues coordinate sn-glycerol 3-phosphate: lysine 105, glycine 135, and threonine 137. Residue alanine 139 participates in NADPH binding. Sn-glycerol 3-phosphate-binding residues include lysine 190, aspartate 243, serine 253, arginine 254, and asparagine 255. Lysine 190 acts as the Proton acceptor in catalysis. Arginine 254 is a binding site for NADPH. Positions 277 and 279 each coordinate NADPH.

Belongs to the NAD-dependent glycerol-3-phosphate dehydrogenase family.

The protein resides in the cytoplasm. It carries out the reaction sn-glycerol 3-phosphate + NAD(+) = dihydroxyacetone phosphate + NADH + H(+). The catalysed reaction is sn-glycerol 3-phosphate + NADP(+) = dihydroxyacetone phosphate + NADPH + H(+). It functions in the pathway membrane lipid metabolism; glycerophospholipid metabolism. Its function is as follows. Catalyzes the reduction of the glycolytic intermediate dihydroxyacetone phosphate (DHAP) to sn-glycerol 3-phosphate (G3P), the key precursor for phospholipid synthesis. This Maridesulfovibrio salexigens (strain ATCC 14822 / DSM 2638 / NCIMB 8403 / VKM B-1763) (Desulfovibrio salexigens) protein is Glycerol-3-phosphate dehydrogenase [NAD(P)+].